A 295-amino-acid chain; its full sequence is Pyridoxal 5'-phosphate synthase subunit PdxS (295 aa).

Residue D25 participates in D-ribose 5-phosphate binding. K82 functions as the Schiff-base intermediate with D-ribose 5-phosphate in the catalytic mechanism. Residue G154 coordinates D-ribose 5-phosphate. R166 is a D-glyceraldehyde 3-phosphate binding site. D-ribose 5-phosphate contacts are provided by residues G215 and 236–237; that span reads GS.

The protein belongs to the PdxS/SNZ family. In the presence of PdxT, forms a dodecamer of heterodimers.

The catalysed reaction is aldehydo-D-ribose 5-phosphate + D-glyceraldehyde 3-phosphate + L-glutamine = pyridoxal 5'-phosphate + L-glutamate + phosphate + 3 H2O + H(+). It participates in cofactor biosynthesis; pyridoxal 5'-phosphate biosynthesis. Functionally, catalyzes the formation of pyridoxal 5'-phosphate from ribose 5-phosphate (RBP), glyceraldehyde 3-phosphate (G3P) and ammonia. The ammonia is provided by the PdxT subunit. Can also use ribulose 5-phosphate and dihydroxyacetone phosphate as substrates, resulting from enzyme-catalyzed isomerization of RBP and G3P, respectively. This Natranaerobius thermophilus (strain ATCC BAA-1301 / DSM 18059 / JW/NM-WN-LF) protein is Pyridoxal 5'-phosphate synthase subunit PdxS.